Consider the following 234-residue polypeptide: 7-cyano-7-deazaguanine synthase (234 aa).

ATP is bound at residue 13–23 (LSGGQDSTTCL). Positions 193, 201, 204, and 207 each coordinate Zn(2+).

The protein belongs to the QueC family. Zn(2+) is required as a cofactor.

The catalysed reaction is 7-carboxy-7-deazaguanine + NH4(+) + ATP = 7-cyano-7-deazaguanine + ADP + phosphate + H2O + H(+). It participates in purine metabolism; 7-cyano-7-deazaguanine biosynthesis. Functionally, catalyzes the ATP-dependent conversion of 7-carboxy-7-deazaguanine (CDG) to 7-cyano-7-deazaguanine (preQ(0)). This is 7-cyano-7-deazaguanine synthase from Chromobacterium violaceum (strain ATCC 12472 / DSM 30191 / JCM 1249 / CCUG 213 / NBRC 12614 / NCIMB 9131 / NCTC 9757 / MK).